Consider the following 286-residue polypeptide: Divergent deoxyribose-phosphate aldolase-like protein (286 aa).

Homodimer. Interacts with ADF; the interaction enhances ADF activity in disassembly of filamentous actin and inhibition of actin polymerization.

It is found in the cytoplasm. Its function is as follows. Involved in regulation of actin dynamics. The polypeptide is Divergent deoxyribose-phosphate aldolase-like protein (Toxoplasma gondii).